Here is a 416-residue protein sequence, read N- to C-terminus: GTPase Obg (416 aa).

The 157-residue stretch at 1–157 (MFQDVLVITV…RRLRLELMLI (157 aa)) folds into the Obg domain. Disordered stretches follow at residues 25 to 44 (EKFVPKGGPDGGDGGRGGSV) and 62 to 82 (TYKAEDGEHGRGSQQHGRGGE). Positions 32–42 (GPDGGDGGRGG) are enriched in gly residues. Positions 63-72 (YKAEDGEHGR) are enriched in basic and acidic residues. The OBG-type G domain occupies 158-324 (ADVGLVGYPN…LKEALHALVR (167 aa)). GTP-binding positions include 164–171 (GYPNAGKS), 189–193 (FTTLS), 211–214 (DIPG), 277–280 (NKVD), and 305–307 (SAL). Mg(2+)-binding residues include Ser171 and Thr191. The OCT domain maps to 336 to 414 (PRKEVQAGVE…IGGLEFEYIP (79 aa)).

This sequence belongs to the TRAFAC class OBG-HflX-like GTPase superfamily. OBG GTPase family. In terms of assembly, monomer. It depends on Mg(2+) as a cofactor.

The protein localises to the cytoplasm. An essential GTPase which binds GTP, GDP and possibly (p)ppGpp with moderate affinity, with high nucleotide exchange rates and a fairly low GTP hydrolysis rate. Plays a role in control of the cell cycle, stress response, ribosome biogenesis and in those bacteria that undergo differentiation, in morphogenesis control. The sequence is that of GTPase Obg from Thermus thermophilus (strain ATCC BAA-163 / DSM 7039 / HB27).